Reading from the N-terminus, the 360-residue chain is Aminomethyltransferase (360 aa).

This sequence belongs to the GcvT family. As to quaternary structure, the glycine cleavage system is composed of four proteins: P, T, L and H.

It carries out the reaction N(6)-[(R)-S(8)-aminomethyldihydrolipoyl]-L-lysyl-[protein] + (6S)-5,6,7,8-tetrahydrofolate = N(6)-[(R)-dihydrolipoyl]-L-lysyl-[protein] + (6R)-5,10-methylene-5,6,7,8-tetrahydrofolate + NH4(+). Functionally, the glycine cleavage system catalyzes the degradation of glycine. This is Aminomethyltransferase from Pseudomonas aeruginosa (strain ATCC 15692 / DSM 22644 / CIP 104116 / JCM 14847 / LMG 12228 / 1C / PRS 101 / PAO1).